The sequence spans 304 residues: Killer cell immunoglobulin-like receptor 2DS1 (304 aa).

Residues 1–21 (MSLTVVSMACVGFFLLQGAWP) form the signal peptide. Residues 22–245 (HEGVHRKPSL…SETGNPRHLH (224 aa)) are Extracellular-facing. Ig-like C2-type domains lie at 42–107 (EETV…VTHS) and 142–205 (GENV…FRDS). Cys49 and Cys100 are disulfide-bonded. N-linked (GlcNAc...) asparagine glycans are attached at residues Asn67, Asn84, Asn144, and Asn178. Cysteines 149 and 198 form a disulfide. The segment at 220-239 (VTGNPSNSWPSPTEPSSETG) is disordered. The span at 223 to 239 (NPSNSWPSPTEPSSETG) shows a compositional bias: low complexity. The chain crosses the membrane as a helical span at residues 246–264 (VLIGTSVVKIPFTILLFFL). The Cytoplasmic portion of the chain corresponds to 265-304 (LHRWCSDKKNAAVMDQEPAGNRTVNSEDSDEQDHQEVSYA). The segment at 280 to 304 (QEPAGNRTVNSEDSDEQDHQEVSYA) is disordered.

Belongs to the immunoglobulin superfamily. As to quaternary structure, interacts with the adapter protein TYROBP/DAP12; the interaction enhances KIR2DS1 stability at the cell surface. In terms of tissue distribution, expressed by NK cells.

It localises to the cell membrane. Receptor on natural killer (NK) cells for some HLA-C alleles such as w6. Does not inhibit the activity of NK cells. The polypeptide is Killer cell immunoglobulin-like receptor 2DS1 (Homo sapiens (Human)).